A 522-amino-acid chain; its full sequence is F-box/LRR-repeat protein 16 (522 aa).

The F-box domain occupies 38-84; it reads YDFTANLPDDCLAHIFQFLSAGDRKRCSLVSKRWLLVDGQNRHRLSL. LRR repeat units lie at residues 115 to 140, 141 to 166, 169 to 191, 266 to 290, 291 to 316, 319 to 344, 348 to 369, 370 to 393, 395 to 420, and 421 to 447; these read SFSL…KLRG, CREI…SCGS, FGAK…SLKR, RLQV…HIVK, TPDC…HIDG, VKRI…VLIG, TYMS…ALCG, SGTI…KFCI, GCLI…KVKK, and CSLV…DDDE.

The chain is F-box/LRR-repeat protein 16 (FBL16) from Arabidopsis thaliana (Mouse-ear cress).